We begin with the raw amino-acid sequence, 238 residues long: 2-C-methyl-D-erythritol 4-phosphate cytidylyltransferase (238 aa).

Belongs to the IspD/TarI cytidylyltransferase family. IspD subfamily.

The enzyme catalyses 2-C-methyl-D-erythritol 4-phosphate + CTP + H(+) = 4-CDP-2-C-methyl-D-erythritol + diphosphate. Its pathway is isoprenoid biosynthesis; isopentenyl diphosphate biosynthesis via DXP pathway; isopentenyl diphosphate from 1-deoxy-D-xylulose 5-phosphate: step 2/6. Catalyzes the formation of 4-diphosphocytidyl-2-C-methyl-D-erythritol from CTP and 2-C-methyl-D-erythritol 4-phosphate (MEP). This chain is 2-C-methyl-D-erythritol 4-phosphate cytidylyltransferase, found in Aliivibrio fischeri (strain ATCC 700601 / ES114) (Vibrio fischeri).